The primary structure comprises 1928 residues: Lactase/phlorizin hydrolase (1928 aa).

An N-terminal signal peptide occupies residues 1–21; the sequence is MELPWTALFLSTVLLGLSCQG. A propeptide spans 22-867 (XBetaGly); sequence SDWESDRNFI…LPVRADFTSR (846 aa). The Extracellular portion of the chain corresponds to 22 to 1883; sequence SDWESDRNFI…LMLGIAEAQT (1862 aa). The interval 46–289 is glycosyl hydrolase-1 1; Region I; it reads NYPPGKQGSD…FIYTLKLEDC (244 aa). Positions 364–856 are glycosyl hydrolase-1 2; Region II; the sequence is VWAAFANQSR…GFSAKKVKRN (493 aa). N-linked (GlcNAc...) asparagine glycosylation is found at Asn-370, Asn-514, Asn-824, Asn-936, Asn-948, Asn-991, and Asn-1037. A glycosyl hydrolase-1 3; Region III. Phlorizin hydrolase/Glycosylceramidase activity region spans residues 904 to 1367; that stretch reads RFRDDFLWGV…DLIANNGMPL (464 aa). The active-site Proton donor; for phlorizin hydrolase/Glycosylceramidase activity is Glu-1067. N-linked (GlcNAc...) asparagine glycosylation is found at Asn-1176 and Asn-1240. Glu-1274 functions as the Nucleophile; for phlorizin hydrolase/Glycosylceramidase activity in the catalytic mechanism. 2 N-linked (GlcNAc...) asparagine glycosylation sites follow: Asn-1281 and Asn-1509. The segment at 1374–1847 is glycosyl hydrolase-1 4; Region IV. Lactase activity; sequence LYGEFPKGFI…CNGFPDPAQG (474 aa). Glu-1539 (proton donor; for lactase activity) is an active-site residue. Asn-1657 and Asn-1684 each carry an N-linked (GlcNAc...) asparagine glycan. Glu-1750 serves as the catalytic Nucleophile; for lactase activity. Residues Asn-1762 and Asn-1815 are each glycosylated (N-linked (GlcNAc...) asparagine). A helical membrane pass occupies residues 1884–1902; sequence ALYVLFALLLLGACSLAFL. Residues 1903-1928 are Cytoplasmic-facing; sequence TYNTGRRSKQGNAQPSQHQLSPISSF.

Belongs to the glycosyl hydrolase 1 family. As to quaternary structure, homodimer. Post-translationally, N-glycosylated. As to expression, intestine.

The protein localises to the apical cell membrane. The enzyme catalyses lactose + H2O = beta-D-galactose + D-glucose. It carries out the reaction phlorizin + H2O = phloretin + beta-D-glucose. The catalysed reaction is D-cellobiose + H2O = beta-D-glucose + D-glucose. It catalyses the reaction quercetin 4'-O-beta-D-glucoside + H2O = quercetin + beta-D-glucose. The enzyme catalyses quercetin 3-O-beta-D-glucoside + H2O = quercetin + beta-D-glucose. It carries out the reaction kaempferol 3-O-beta-D-glucoside + H2O = kaempferol + beta-D-glucose. The catalysed reaction is luteolin 7-O-beta-D-glucoside + H2O = luteolin + beta-D-glucose. It catalyses the reaction luteolin 4'-O-beta-D-glucoside + H2O = luteolin + beta-D-glucose. The enzyme catalyses (2S)-naringenin 7-O-beta-D-glucoside + H2O = (2S)-naringenin + beta-D-glucose. It carries out the reaction eriodictyol-7-O-beta-D-glucoside + H2O = (S)-eriodictyol + beta-D-glucose. The catalysed reaction is apigenin 7-O-beta-D-glucoside + H2O = apigenin + beta-D-glucose. It catalyses the reaction daidzein 7-O-beta-D-glucoside + H2O = daidzein + beta-D-glucose + H(+). The enzyme catalyses genistein 7-O-beta-D-glucoside + H2O = genistein + beta-D-glucose. It carries out the reaction a beta-D-galactosyl-N-acylsphingosine + H2O = a ceramide + beta-D-galactose.. The catalysed reaction is beta-D-glucosyl-(1&lt;-&gt;1')-N-hexadecanoylsphing-4-enine + H2O = N-hexadecanoylsphing-4-enine + beta-D-glucose. It catalyses the reaction beta-D-galactosyl-(1&lt;-&gt;1')-N-hexadecanoylsphing-4-enine + H2O = beta-D-galactose + N-hexadecanoylsphing-4-enine. The enzyme catalyses beta-D-galactosyl-(1&lt;-&gt;1')-N-hexadecanoylsphinganine + H2O = N-hexadecanoylsphinganine + beta-D-galactose. It carries out the reaction beta-D-glucosyl-(1&lt;-&gt;1')-N-hexadecanoylsphinganine + H2O = N-hexadecanoylsphinganine + beta-D-glucose. Broad specificity glycosidase of the intestinal brush border membrane that hydrolyzes lactose, the main sugar in mammalian milk, to produce D-glucose and D-galactose. The mature protein is composed of two domains that catalyze the hydrolysis of beta-glucopyranosides and beta-galactopyranosides, with a preference for hydrophilic aglycones (in lactose and cellobiose) for one domain and hydrophobic aglycones (in phlorizin and glycosylceramides) for the other. The protein is Lactase/phlorizin hydrolase of Rattus norvegicus (Rat).